A 78-amino-acid polypeptide reads, in one-letter code: Short neurotoxin SNTX6 (78 aa).

Positions 1 to 21 (MKTLLLTFLVVTIVCLDLGYT) are cleaved as a signal peptide. 4 cysteine pairs are disulfide-bonded: C24–C40, C33–C58, C62–C70, and C71–C76.

This sequence belongs to the three-finger toxin family. Short-chain subfamily. Expressed by the venom gland.

It is found in the secreted. Its function is as follows. This three-finger toxin binds and inhibits the nicotinic acetylcholine receptor (nAChR). The protein is Short neurotoxin SNTX6 of Ophiophagus hannah (King cobra).